We begin with the raw amino-acid sequence, 436 residues long: Probable transporter MCH1 (436 aa).

A run of 7 helical transmembrane segments spans residues 27–47, 66–86, 93–113, 119–139, 155–175, 188–208, and 249–269; these read VVAF…LLFT, MISS…GYLA, LLSL…SYLV, SVIG…SLYF, LAIS…AQIL, LEVV…ASFV, and FVSF…ILNI. Asparagine 278 carries N-linked (GlcNAc...) asparagine glycosylation. 5 consecutive transmembrane segments (helical) span residues 295 to 312, 325 to 345, 347 to 367, 373 to 393, and 410 to 430; these read VSIM…LGVL, LLVV…SAIL, GVSY…IWGI, TWGS…MFYG, and TAGA…IWYA.

This sequence belongs to the major facilitator superfamily.

The protein resides in the vacuole membrane. Functionally, probable transporter. The sequence is that of Probable transporter MCH1 (MCH1) from Candida albicans (strain SC5314 / ATCC MYA-2876) (Yeast).